A 478-amino-acid polypeptide reads, in one-letter code: Proton-coupled amino acid transporter 2 (478 aa).

Polar residues-rich tracts occupy residues 1 to 14 (MSVT…QVAT) and 26 to 37 (KLQSQDPSPANG). Residues 1-46 (MSVTKSARSPQVATPLNLDLPESAKKLQSQDPSPANGSSSESSKKT) are disordered. Over 1 to 53 (MSVTKSARSPQVATPLNLDLPESAKKLQSQDPSPANGSSSESSKKTKGITGFQ) the chain is Cytoplasmic. Residues 54–74 (TLVHLVKGNMGTGILGLPLAV) form a helical membrane-spanning segment. Over 75–76 (KN) the chain is Extracellular. Residues 77 to 97 (AGILMGPLSLLVMGLIACHCM) form a helical membrane-spanning segment. At 98 to 143 (HILVRCAQRFCHRLNKPFMDYGDTVMHGLAFSPNAWLQNHAHWGRR) the chain is on the cytoplasmic side. The chain crosses the membrane as a helical span at residues 144–164 (VVSFFLIVTQLGFCCVYIVFL). Residues 165 to 192 (ADNLKQVVEAVNSTTISCHKNETVVLTP) lie on the Extracellular side of the membrane. The helical transmembrane segment at 193-213 (TMDSRLYMLSFLPVLGLLVFV) threads the bilayer. At 214–217 (RNLR) the chain is on the cytoplasmic side. A helical transmembrane segment spans residues 218-238 (VLTIFSLLANISMLVSLVIIA). The Extracellular segment spans residues 239-259 (QYIIQEIPDASQLPLVASWKT). A helical membrane pass occupies residues 260 to 280 (YPLFFGTAIFSFESIGVVLPL). The Cytoplasmic segment spans residues 281–292 (ENKMKDARGFPT). The helical transmembrane segment at 293-313 (ILSLGMSIITTLYIAIGALGY) threads the bilayer. Residues 314–340 (LRFGDDIKASITLNLPNCWLYQSVKLL) are Extracellular-facing. The chain crosses the membrane as a helical span at residues 341-361 (YVVGILCTYALQFYVPAEIII). Over 362–374 (PLAVSQVSKRWAL) the chain is Cytoplasmic. The chain crosses the membrane as a helical span at residues 375 to 395 (PVDLSIRLALVCLTCMLAILI). Residues 396 to 399 (PRLD) lie on the Extracellular side of the membrane. A helical transmembrane segment spans residues 400-420 (LVLSLVGSVSSSALALIIPPL). The Cytoplasmic segment spans residues 421-441 (LEVVTYYGEGISPLTVTKDAL). A helical membrane pass occupies residues 442–462 (ISILGFMGFVVGTYQALDELI). Residues 463–478 (KSGNSPALSNSTMFIQ) are Extracellular-facing.

It belongs to the amino acid/polyamine transporter 2 family. In terms of tissue distribution, expressed in spinal cord, brain, testis, lung, heart, colon, spleen, kidney and muscle. Found in neuronal cell bodies in the anterior horn, in spinal cord brain stem, cerebellum, hippocampus, hypothalamus, rhinencephalon, cerebral cortex, and olfactory bulb in the brain. Also expressed in bone and fat tissues.

The protein localises to the cell membrane. It localises to the endoplasmic reticulum membrane. It is found in the recycling endosome membrane. It carries out the reaction glycine(in) + H(+)(in) = glycine(out) + H(+)(out). The catalysed reaction is L-alanine(in) + H(+)(in) = L-alanine(out) + H(+)(out). The enzyme catalyses D-alanine(in) + H(+)(in) = D-alanine(out) + H(+)(out). It catalyses the reaction L-proline(out) + H(+)(out) = L-proline(in) + H(+)(in). It carries out the reaction D-proline(out) + H(+)(out) = D-proline(in) + H(+)(in). The catalysed reaction is 4-hydroxy-L-proline(in) + H(+)(in) = 4-hydroxy-L-proline(out) + H(+)(out). The enzyme catalyses L-serine(in) + H(+)(in) = L-serine(out) + H(+)(out). It catalyses the reaction D-serine(out) + H(+)(out) = D-serine(in) + H(+)(in). It carries out the reaction beta-alanine(in) + H(+)(in) = beta-alanine(out) + H(+)(out). The catalysed reaction is 4-aminobutanoate(in) + H(+)(in) = 4-aminobutanoate(out) + H(+)(out). The enzyme catalyses sarcosine(in) + H(+)(in) = sarcosine(out) + H(+)(out). It catalyses the reaction N,N-dimethylglycine(in) + H(+)(in) = N,N-dimethylglycine(out) + H(+)(out). In terms of biological role, electrogenic proton/amino acid symporter with a high selectivity for the small side chains amino acids glycine, alanine and proline, where both L- and D-enantiomers are transported. Extension of the backbone length, as in beta-alanine and 4-aminobutanoate or methylation of the amino group, as in sarcosine and N,N-dimethylglycine, are also tolerated but decrease transport efficiency. A free carboxyl group is preferred. In Mus musculus (Mouse), this protein is Proton-coupled amino acid transporter 2.